Consider the following 391-residue polypeptide: Stearoyl-[acyl-carrier-protein] 9-desaturase 6, chloroplastic (391 aa).

Residues methionine 1 to valine 38 constitute a chloroplast transit peptide. Glutamate 130, glutamate 168, histidine 171, glutamate 221, glutamate 254, and histidine 257 together coordinate Fe cation.

This sequence belongs to the fatty acid desaturase type 2 family. As to quaternary structure, homodimer. Fe(2+) serves as cofactor.

The protein localises to the plastid. It localises to the chloroplast. The catalysed reaction is octadecanoyl-[ACP] + 2 reduced [2Fe-2S]-[ferredoxin] + O2 + 2 H(+) = (9Z)-octadecenoyl-[ACP] + 2 oxidized [2Fe-2S]-[ferredoxin] + 2 H2O. It participates in lipid metabolism; fatty acid metabolism. Functionally, converts stearoyl-ACP to oleoyl-ACP by introduction of a cis double bond between carbons 9 and 10 of the acyl chain. In Arabidopsis thaliana (Mouse-ear cress), this protein is Stearoyl-[acyl-carrier-protein] 9-desaturase 6, chloroplastic (S-ACP-DES6).